Here is a 601-residue protein sequence, read N- to C-terminus: MSGPRSGSGSGGSTGRPGDADSQRSAYEKEVHELTTQVTFLEEEVAMLRRRLSESPRQVRVLEERLAQVQVELQTATGQNDKLVATLREARDQIISLKEEVDRLAQPPSGYGVFIRGYDDGTVDVFTQGRKLRVTVSPNVEADVLQPGQEVMLNEALNVVEVRAFERQGEIVLLKEVLESGDRALVIGHTDEERVVMLAQPLLDGPIRAGDSLLIEPRSGYAFERIPKSEVEELVLEEVPDIGYEQIGGLKGQIESIRDAVELPFLYKELFLEHKLKPPKGVLLYGPPGCGKTLIAKAVANSLAKKVEAQTGQGSGRAFFLNIKGPELLNKYVGETERQIRLVFQRAREKASEGMPVIVFFDEMDSIFRTRGSGVSSDVENTIVPQLLSEIDGVEQLENVIVIGASNREDMIDPAILRPGRLDVKIKVERPDAEAAKDIFAKYVLPELPLHADDLAEHGGNREATCQGMIQRVVERMYAESEENRFLEVTYANGDKEVLYFKDFNSGAMIENIVARAKKMAVKDLIESGVRGLRMQHLLSACLDEFKENEDLPNTTNPDDWARISGKKGERIVYIRTLVTGTKGTEAGRSIDTIANTGQYL.

Over residues 1-15 the composition is skewed to gly residues; sequence MSGPRSGSGSGGSTG. Residues 1 to 29 are disordered; it reads MSGPRSGSGSGGSTGRPGDADSQRSAYEK. Over residues 18–29 the composition is skewed to basic and acidic residues; it reads GDADSQRSAYEK. Residues 19–106 are a coiled coil; that stretch reads DADSQRSAYE…LKEEVDRLAQ (88 aa). 289-294 is a binding site for ATP; it reads GCGKTL. A docks into pockets in the proteasome alpha-ring region spans residues 600–601; the sequence is YL.

It belongs to the AAA ATPase family. As to quaternary structure, homohexamer. Assembles into a hexameric ring structure that caps the 20S proteasome core. Strongly interacts with the prokaryotic ubiquitin-like protein Pup through a hydrophobic interface; the interacting region of ARC lies in its N-terminal coiled-coil domain. There is one Pup binding site per ARC hexamer ring. Upon ATP-binding, the C-terminus of ARC interacts with the alpha-rings of the proteasome core, possibly by binding to the intersubunit pockets.

It functions in the pathway protein degradation; proteasomal Pup-dependent pathway. In terms of biological role, ATPase which is responsible for recognizing, binding, unfolding and translocation of pupylated proteins into the bacterial 20S proteasome core particle. May be essential for opening the gate of the 20S proteasome via an interaction with its C-terminus, thereby allowing substrate entry and access to the site of proteolysis. Thus, the C-termini of the proteasomal ATPase may function like a 'key in a lock' to induce gate opening and therefore regulate proteolysis. The sequence is that of Proteasome-associated ATPase from Parafrankia sp. (strain EAN1pec).